A 324-amino-acid chain; its full sequence is 33 kDa ribonucleoprotein, chloroplastic (324 aa).

A chloroplast-targeting transit peptide spans 1–71; sequence MSGCCFSFAA…YRSSIFLSTC (71 aa). 2 consecutive RRM domains span residues 114–192 and 217–296; these read GRLY…FPEV and HKLY…AGQK. The disordered stretch occupies residues 294-324; the sequence is GQKAPVSSPPVVETSPENDSDNSELLSSLSS. A compositionally biased stretch (low complexity) spans 298 to 308; that stretch reads PVSSPPVVETS.

It is found in the plastid. The protein localises to the chloroplast. In terms of biological role, could be involved in splicing and/or processing of chloroplast RNA's. This is 33 kDa ribonucleoprotein, chloroplastic from Nicotiana sylvestris (Wood tobacco).